Reading from the N-terminus, the 545-residue chain is Luciferin 4-monooxygenase (545 aa).

The Microbody targeting signal motif lies at 543-545 (SKL).

The protein belongs to the ATP-dependent AMP-binding enzyme family. Mg(2+) serves as cofactor.

Its subcellular location is the peroxisome. The enzyme catalyses firefly D-luciferin + ATP + O2 = firefly oxyluciferin + hnu + AMP + CO2 + diphosphate. Functionally, produces green light with a wavelength of 562 nm. This chain is Luciferin 4-monooxygenase, found in Photuris pensylvanica (Pennsylania firefly).